A 339-amino-acid chain; its full sequence is Uroporphyrinogen decarboxylase (339 aa).

Residues 23-27 (RQAGR), Asp-72, Tyr-147, Ser-202, and His-315 each bind substrate.

Belongs to the uroporphyrinogen decarboxylase family. As to quaternary structure, homodimer.

The protein resides in the cytoplasm. It carries out the reaction uroporphyrinogen III + 4 H(+) = coproporphyrinogen III + 4 CO2. The protein operates within porphyrin-containing compound metabolism; protoporphyrin-IX biosynthesis; coproporphyrinogen-III from 5-aminolevulinate: step 4/4. Its function is as follows. Catalyzes the decarboxylation of four acetate groups of uroporphyrinogen-III to yield coproporphyrinogen-III. This chain is Uroporphyrinogen decarboxylase, found in Desulfotalea psychrophila (strain LSv54 / DSM 12343).